Reading from the N-terminus, the 188-residue chain is F-box only protein 36 (188 aa).

Residues 91–137 form the F-box domain; it reads FDFLERLSDDLLLTIISYLDLEDIARLCQTSHRFAKLCMSDKLWEQI.

In terms of assembly, directly interacts with SKP1 and CUL1.

In terms of biological role, substrate-recognition component of the SCF (SKP1-CUL1-F-box protein)-type E3 ubiquitin ligase complex. The polypeptide is F-box only protein 36 (FBXO36) (Homo sapiens (Human)).